The following is a 221-amino-acid chain: Phosphoenolpyruvate guanylyltransferase (221 aa).

Phosphoenolpyruvate contacts are provided by T154, G169, and S172.

It belongs to the CofC family.

The catalysed reaction is phosphoenolpyruvate + GTP + H(+) = enolpyruvoyl-2-diphospho-5'-guanosine + diphosphate. It participates in cofactor biosynthesis; coenzyme F420 biosynthesis. In terms of biological role, guanylyltransferase that catalyzes the activation of phosphoenolpyruvate (PEP) as enolpyruvoyl-2-diphospho-5'-guanosine, via the condensation of PEP with GTP. It is involved in the biosynthesis of coenzyme F420, a hydride carrier cofactor. This chain is Phosphoenolpyruvate guanylyltransferase, found in Mycolicibacterium smegmatis (strain ATCC 700084 / mc(2)155) (Mycobacterium smegmatis).